The sequence spans 273 residues: MAIVKCKPTSAGRRFVVKVVNQELHKGAPYAPLLEKKSKSGGRNNNGRITTRHIGGGHKQHYRLVDFRRNKDGIPATVERIEYDPNRTAHIALLKYADGERRYIIAPKGVVAGDQLISGVNAPIKAGNTLPLRNIPVGSTIHGVELKPGKGAQIARSAGASAQLVAREGAYVTLRLRSGEMRKVLADCRATLGEVSNSEHSLRSLGKAGAKRWRGVRPTVRGVAMNPVDHPHGGGEGRTSGGRHPVSPWGFPTKGAKTRSNKRTDNMIVRRRK.

Disordered regions lie at residues 34-54 (LEKK…TRHI) and 223-273 (VAMN…RRRK).

This sequence belongs to the universal ribosomal protein uL2 family. Part of the 50S ribosomal subunit. Forms a bridge to the 30S subunit in the 70S ribosome.

In terms of biological role, one of the primary rRNA binding proteins. Required for association of the 30S and 50S subunits to form the 70S ribosome, for tRNA binding and peptide bond formation. It has been suggested to have peptidyltransferase activity; this is somewhat controversial. Makes several contacts with the 16S rRNA in the 70S ribosome. This chain is Large ribosomal subunit protein uL2, found in Azotobacter vinelandii (strain DJ / ATCC BAA-1303).